We begin with the raw amino-acid sequence, 482 residues long: MFGLESKSPKILVIGDLMIDHYVWGSCERISPEAPVQVVDVKDENNRLGGACNVVHNLIALNAQVFVCGVVGNDEAGFWLGEKLESMGVDISYLFVDTSRPTTKKTRVIIANQQVLRVDRESKTPIDSHIHNNIVQHLHAVLDEVDCIIISDYGKGLLNDELTHFVIDYAKSKSKLVLCDPKGKDYSKYTGATLLTPNKKEAELATGITICDKDSLIKAGMTLKTQCQLDISLITLSEDGIGIFDNNQIHIIPTRAKEVYDVTGAGDTVIAALSFALSSGCDIFQACEFANVAAAVVVGKVGSAVATHSEILQYIHTQPSNLQQYIESKIISQESLFTLLKDLKQSKIVFTNGCFDILHIGHLSYLNKARDLGDILIVGLNDDDSIKRLKGKERPINTLHNRALMLAGLECVDYVVSFCQDTPLELIKAIKPDVLVKGGDYHNKEVVGKEYAKEVVLIDFIEGHSTSNIIESIQRSKICKHS.

Residues 1-322 (MFGLESKSPK…QYIHTQPSNL (322 aa)) form a ribokinase region. Residue 198–201 (NKKE) participates in ATP binding. Asp267 is a catalytic residue. Positions 350 to 482 (FTNGCFDILH…IQRSKICKHS (133 aa)) are cytidylyltransferase.

This sequence in the N-terminal section; belongs to the carbohydrate kinase PfkB family. It in the C-terminal section; belongs to the cytidylyltransferase family. Homodimer.

It carries out the reaction D-glycero-beta-D-manno-heptose 7-phosphate + ATP = D-glycero-beta-D-manno-heptose 1,7-bisphosphate + ADP + H(+). The enzyme catalyses D-glycero-beta-D-manno-heptose 1-phosphate + ATP + H(+) = ADP-D-glycero-beta-D-manno-heptose + diphosphate. It participates in nucleotide-sugar biosynthesis; ADP-L-glycero-beta-D-manno-heptose biosynthesis; ADP-L-glycero-beta-D-manno-heptose from D-glycero-beta-D-manno-heptose 7-phosphate: step 1/4. Its pathway is nucleotide-sugar biosynthesis; ADP-L-glycero-beta-D-manno-heptose biosynthesis; ADP-L-glycero-beta-D-manno-heptose from D-glycero-beta-D-manno-heptose 7-phosphate: step 3/4. It functions in the pathway bacterial outer membrane biogenesis; LPS core biosynthesis. In terms of biological role, catalyzes the phosphorylation of D-glycero-D-manno-heptose 7-phosphate at the C-1 position to selectively form D-glycero-beta-D-manno-heptose-1,7-bisphosphate. Catalyzes the ADP transfer from ATP to D-glycero-beta-D-manno-heptose 1-phosphate, yielding ADP-D-glycero-beta-D-manno-heptose. This Helicobacter hepaticus (strain ATCC 51449 / 3B1) protein is Bifunctional protein HldE.